The following is a 311-amino-acid chain: tRNA-cytidine(32) 2-sulfurtransferase (311 aa).

Residues 47–52 carry the PP-loop motif motif; the sequence is SGGKDS. The [4Fe-4S] cluster site is built by cysteine 122, cysteine 125, and cysteine 213.

Belongs to the TtcA family. Homodimer. Mg(2+) is required as a cofactor. It depends on [4Fe-4S] cluster as a cofactor.

It localises to the cytoplasm. The catalysed reaction is cytidine(32) in tRNA + S-sulfanyl-L-cysteinyl-[cysteine desulfurase] + AH2 + ATP = 2-thiocytidine(32) in tRNA + L-cysteinyl-[cysteine desulfurase] + A + AMP + diphosphate + H(+). It functions in the pathway tRNA modification. Its function is as follows. Catalyzes the ATP-dependent 2-thiolation of cytidine in position 32 of tRNA, to form 2-thiocytidine (s(2)C32). The sulfur atoms are provided by the cysteine/cysteine desulfurase (IscS) system. This chain is tRNA-cytidine(32) 2-sulfurtransferase, found in Pectobacterium atrosepticum (strain SCRI 1043 / ATCC BAA-672) (Erwinia carotovora subsp. atroseptica).